The primary structure comprises 391 residues: MAEELKPELWTTSSNSALKLSLVNDENAVQFSPIFTYPIFGQAEQLFGYQDLNILLAFDSVTFKPFLNIKYTKKLERGLDDVEGSILKFLPEGDVILKDEVEWVDAFNGEREKFALPNSESKVAEYTSGGESFAIFKVHLSDPNIRQLHRRMQIFTLLFIEAASYIDEDDSAWDIFMTFNTSTRQCIGYTTTYKHWRYINGQEFDSSEKTTKRAKISQFIIFPPYQSKSHGSHLYSAAIDVWSKEEKISEVTVEDPNEAFDDLRDRCDFMRLSGSGLSSSIPEDVPIPRTWLTEQARKYKLSLVQFTRLVEMILLYDNSPNFEIQVKARLYQKNHEVLTGMDSDTRKAKLQEAFTSLKEDYARILQKVPNRRRVLPSDEENAGESKRHKKE.

Positions 193–195 are interaction with histone H4 N-terminus; the sequence is YKH. Residues 219–221 and 226–232 each bind acetyl-CoA; these read FII and QSKSHGS. E254 serves as the catalytic Proton donor/acceptor. Residues 372–391 form a disordered region; the sequence is RRVLPSDEENAGESKRHKKE.

Belongs to the HAT1 family. As to quaternary structure, component of the HAT-B complex composed of at least HAT1 and HAT2. The HAT-B complex binds to histone H4 tail.

The protein localises to the cytoplasm. It is found in the nucleus. It carries out the reaction L-lysyl-[protein] + acetyl-CoA = N(6)-acetyl-L-lysyl-[protein] + CoA + H(+). Functionally, catalytic component of the histone acetylase B (HAT-B) complex. Acetylates 'Lys-12' of histone H4 which is required for telomeric silencing. Has intrinsic substrate specificity that modifies lysine in recognition sequence GXGKXG. Involved in DNA double-strand break repair. This chain is Histone acetyltransferase type B catalytic subunit (HAT1), found in Eremothecium gossypii (strain ATCC 10895 / CBS 109.51 / FGSC 9923 / NRRL Y-1056) (Yeast).